Here is a 291-residue protein sequence, read N- to C-terminus: MPELPEVETVRRGLADRLVDFQIGQVEVCRERAIASPGGSALFIKMLCGMHVGSWLRRGKYLMASLHHEIAQSSADSEPDPDGGWWGVHLRMTGQFQWHEAISSPCPHTRVRIWNKKNEELRFVDTRSFGQMWWVPPGNAPETIITGLQKLGPEPFSSAFNSSYLSKRLKGSKRPIKSALLDQSIVAGAGNIYTDESLFAARIRPHTPSGQLKKVELERLCNCLTEVLRVSIGAGGTTFSDFRDLEGINGNYGGQAWVYRRGGQACRICSTPIRRESLCGRGTHWCPNCQR.

Residue P2 is the Schiff-base intermediate with DNA of the active site. Residue E3 is the Proton donor of the active site. The active-site Proton donor; for beta-elimination activity is K60. The DNA site is built by H108 and R127. The FPG-type zinc-finger motif lies at 257–291 (WVYRRGGQACRICSTPIRRESLCGRGTHWCPNCQR). The active-site Proton donor; for delta-elimination activity is R281.

This sequence belongs to the FPG family. In terms of assembly, monomer. It depends on Zn(2+) as a cofactor.

It carries out the reaction Hydrolysis of DNA containing ring-opened 7-methylguanine residues, releasing 2,6-diamino-4-hydroxy-5-(N-methyl)formamidopyrimidine.. It catalyses the reaction 2'-deoxyribonucleotide-(2'-deoxyribose 5'-phosphate)-2'-deoxyribonucleotide-DNA = a 3'-end 2'-deoxyribonucleotide-(2,3-dehydro-2,3-deoxyribose 5'-phosphate)-DNA + a 5'-end 5'-phospho-2'-deoxyribonucleoside-DNA + H(+). Its function is as follows. Involved in base excision repair of DNA damaged by oxidation or by mutagenic agents. Acts as a DNA glycosylase that recognizes and removes damaged bases. Has a preference for oxidized purines, such as 7,8-dihydro-8-oxoguanine (8-oxoG). Has AP (apurinic/apyrimidinic) lyase activity and introduces nicks in the DNA strand. Cleaves the DNA backbone by beta-delta elimination to generate a single-strand break at the site of the removed base with both 3'- and 5'-phosphates. In Prochlorococcus marinus (strain MIT 9313), this protein is Formamidopyrimidine-DNA glycosylase.